We begin with the raw amino-acid sequence, 330 residues long: Class III chitinase ARB_03514 (330 aa).

The first 22 residues, 1–22 (MSSVKNILSFVALFAGVKTAYA), serve as a signal peptide directing secretion. Residues 23 to 314 (GLNSPGHNNV…SAVKGALSAG (292 aa)) enclose the GH18 domain. Asn-61 and Asn-135 each carry an N-linked (GlcNAc...) asparagine glycan. The active-site Proton donor is Glu-155. Asn-278 and Asn-302 each carry an N-linked (GlcNAc...) asparagine glycan.

This sequence belongs to the glycosyl hydrolase 18 family. Chitinase class III subfamily. In terms of assembly, monomer.

Its subcellular location is the secreted. The enzyme catalyses Random endo-hydrolysis of N-acetyl-beta-D-glucosaminide (1-&gt;4)-beta-linkages in chitin and chitodextrins.. Secreted chitinase involved in the degradation of chitin, a component of the cell walls of fungi and exoskeletal elements of some animals (including worms and arthropods). Plays a morphogenetic role during apical growth, cell division and differentiation (cell wall morphogenesis). The protein is Class III chitinase ARB_03514 of Arthroderma benhamiae (strain ATCC MYA-4681 / CBS 112371) (Trichophyton mentagrophytes).